The chain runs to 525 residues: Mannuronan C5-epimerase AlgG (525 aa).

Positions 1–29 (MNVQRKLASTQLKPVLLGVLLATSAWSQA) are cleaved as a signal peptide. 5 PbH1 repeats span residues 287 to 309 (ADDV…DPHD), 311 to 334 (SERL…IVSR), 336 to 358 (VNNS…VLDR), 360 to 382 (SEHN…TLYE), and 383 to 405 (SSNN…RMRN). The active-site Proton acceptor is His-308.

Belongs to the D-mannuronate C5-epimerase family.

Its subcellular location is the periplasm. The enzyme catalyses [(1-&gt;4)-beta-D-mannuronosyl](n) = [alginate](n). The protein operates within glycan biosynthesis; alginate biosynthesis. With respect to regulation, inhibited by zinc. Its function is as follows. Catalyzes the epimerization of beta-D-mannuronate to alpha-L-guluronate during the synthesis of the linear polysaccharide alginate. In addition, is part of a periplasmic protein complex that protects alginate from degradation by AlgL by channeling the newly formed alginate polymer through a scaffold that transfers the alginate polymer through the periplasmic space to the outer membrane secretin AlgE. The polypeptide is Mannuronan C5-epimerase AlgG (Azotobacter vinelandii).